The primary structure comprises 476 residues: Ribulose bisphosphate carboxylase large chain (476 aa).

A propeptide spanning residues Met-1–Ser-2 is cleaved from the precursor. Pro-3 bears the N-acetylproline mark. Lys-14 is modified (N6,N6,N6-trimethyllysine). Residues Asn-123 and Thr-173 each contribute to the substrate site. Catalysis depends on Lys-175, which acts as the Proton acceptor. Lys-177 contributes to the substrate binding site. The Mg(2+) site is built by Lys-201, Asp-203, and Glu-204. Lys-201 carries the N6-carboxylysine modification. The Proton acceptor role is filled by His-294. Residues Arg-295, His-327, and Ser-379 each contribute to the substrate site.

The protein belongs to the RuBisCO large chain family. Type I subfamily. Heterohexadecamer of 8 large chains and 8 small chains; disulfide-linked. The disulfide link is formed within the large subunit homodimers. It depends on Mg(2+) as a cofactor. The disulfide bond which can form in the large chain dimeric partners within the hexadecamer appears to be associated with oxidative stress and protein turnover.

It localises to the plastid. Its subcellular location is the chloroplast. It carries out the reaction 2 (2R)-3-phosphoglycerate + 2 H(+) = D-ribulose 1,5-bisphosphate + CO2 + H2O. The catalysed reaction is D-ribulose 1,5-bisphosphate + O2 = 2-phosphoglycolate + (2R)-3-phosphoglycerate + 2 H(+). In terms of biological role, ruBisCO catalyzes two reactions: the carboxylation of D-ribulose 1,5-bisphosphate, the primary event in carbon dioxide fixation, as well as the oxidative fragmentation of the pentose substrate in the photorespiration process. Both reactions occur simultaneously and in competition at the same active site. This is Ribulose bisphosphate carboxylase large chain from Arenaria drummondii (Drummond sandwort).